The primary structure comprises 453 residues: Alpha-glucosidase (453 aa).

3 to 69 (TKIVLVGAGS…LPFIVSATTD (67 aa)) contacts NAD(+). Asparagine 149 contributes to the substrate binding site. Cysteine 171 is a Mn(2+) binding site. The active-site Proton donor is histidine 172. Histidine 201 provides a ligand contact to Mn(2+).

Homotetramer. Mn(2+) serves as cofactor. The cofactor is Co(2+). It depends on Ca(2+) as a cofactor. Fe(2+) is required as a cofactor. Requires Mg(2+) as cofactor. Sr(2+) serves as cofactor. The cofactor is Ni(2+). It depends on NAD(+) as a cofactor.

The catalysed reaction is Hydrolysis of terminal, non-reducing (1-&gt;4)-linked alpha-D-glucose residues with release of alpha-D-glucose.. It functions in the pathway glycan degradation; palatinose degradation. Its activity is regulated as follows. Is inhibited by EDTA in vitro. Its function is as follows. Alpha-glucosidase with broad specificity. Hydrolyzes maltose, palatinose, maltulose, trehalose, trehalulose, turanose, leucrose, sucrose and maltitol. Is not active against alpha-galactosides, e.g. melibiose, and alpha-mannosides. Shows an obligate requirement for an O-alpha-glycosidic linkage, since it is not able to cleave beta-glycosidic bonds (cellobiose, gentiobiose, lactose, sophorose or laminaribiose). Cannot hydrolyze phosphorylated alpha-glucosides derivatives. Seems to be involved in the degradation of palatinose, a sucrose isomer that is formed as a reserve material under conditions of excess carbon availability, sequestered in a form unavailable to competitors such as fungi or the host plant, and whose consumption appears to be postponed until the preferentially metabolized carbon source (e.g. sucrose) is depleted. The sequence is that of Alpha-glucosidase (palH) from Erwinia rhapontici (Pectobacterium rhapontici).